The chain runs to 453 residues: Pup--protein ligase (453 aa).

Residue Glu9 coordinates Mg(2+). Arg53 lines the ATP pocket. Residue Tyr55 coordinates Mg(2+). The active-site Proton acceptor is the Asp57. A Mg(2+)-binding site is contributed by Glu63. Positions 66 and 420 each coordinate ATP.

It belongs to the Pup ligase/Pup deamidase family. Pup-conjugating enzyme subfamily.

It catalyses the reaction ATP + [prokaryotic ubiquitin-like protein]-L-glutamate + [protein]-L-lysine = ADP + phosphate + N(6)-([prokaryotic ubiquitin-like protein]-gamma-L-glutamyl)-[protein]-L-lysine.. The protein operates within protein degradation; proteasomal Pup-dependent pathway. It functions in the pathway protein modification; protein pupylation. Catalyzes the covalent attachment of the prokaryotic ubiquitin-like protein modifier Pup to the proteasomal substrate proteins, thereby targeting them for proteasomal degradation. This tagging system is termed pupylation. The ligation reaction involves the side-chain carboxylate of the C-terminal glutamate of Pup and the side-chain amino group of a substrate lysine. This is Pup--protein ligase from Streptomyces griseus subsp. griseus (strain JCM 4626 / CBS 651.72 / NBRC 13350 / KCC S-0626 / ISP 5235).